Reading from the N-terminus, the 455-residue chain is 2-succinylbenzoate--CoA ligase (455 aa).

This sequence belongs to the ATP-dependent AMP-binding enzyme family. MenE subfamily.

The enzyme catalyses 2-succinylbenzoate + ATP + CoA = 2-succinylbenzoyl-CoA + AMP + diphosphate. The protein operates within quinol/quinone metabolism; 1,4-dihydroxy-2-naphthoate biosynthesis; 1,4-dihydroxy-2-naphthoate from chorismate: step 5/7. It participates in quinol/quinone metabolism; menaquinone biosynthesis. Its function is as follows. Converts 2-succinylbenzoate (OSB) to 2-succinylbenzoyl-CoA (OSB-CoA). The polypeptide is 2-succinylbenzoate--CoA ligase (Salmonella typhimurium (strain LT2 / SGSC1412 / ATCC 700720)).